The sequence spans 774 residues: Ion-translocating oxidoreductase complex subunit C (774 aa).

2 4Fe-4S ferredoxin-type domains span residues 359–389 (ELPE…QQLH) and 399–428 (QLLA…VQYY). C369, C372, C375, C379, C408, C411, C414, and C418 together coordinate [4Fe-4S] cluster. Positions 453 to 490 (EQRQARLRRDEERRAAERAQRAEKAALARAAQAEREEA) are enriched in basic and acidic residues. Positions 453 to 493 (EQRQARLRRDEERRAAERAQRAEKAALARAAQAEREEAAPA) are disordered.

This sequence belongs to the 4Fe4S bacterial-type ferredoxin family. RnfC subfamily. The complex is composed of six subunits: RnfA, RnfB, RnfC, RnfD, RnfE and RnfG. It depends on [4Fe-4S] cluster as a cofactor.

Its subcellular location is the cell inner membrane. In terms of biological role, part of a membrane-bound complex that couples electron transfer with translocation of ions across the membrane. The sequence is that of Ion-translocating oxidoreductase complex subunit C from Pseudomonas aeruginosa (strain ATCC 15692 / DSM 22644 / CIP 104116 / JCM 14847 / LMG 12228 / 1C / PRS 101 / PAO1).